The chain runs to 227 residues: MKRADFCIIGLGRFGMQVAQSLKENNFNLLLIDLDDKKTDTASQQFDYVICCDASNLTALEELQIDEFAGVIVGVTNIEASIMICANLRELGQKNIIAKAKNEVHKRVLSTMGIREALIPEKIVGKNLVIRLIHGLENEIINLGNEIIFIRSAVNNKAFFNKRLEEINFRQNTDANIISIMRSNKTVVFPLGPNTEIQPGDIITAVCQQKSLNKYLNYINPKTKNKN.

Residues 3–119 (RADFCIIGLG…STMGIREALI (117 aa)) form the RCK N-terminal domain. Residues 134–221 (HGLENEIINL…LNKYLNYINP (88 aa)) enclose the RCK C-terminal domain.

This is an uncharacterized protein from Mycoplasma genitalium (strain ATCC 33530 / DSM 19775 / NCTC 10195 / G37) (Mycoplasmoides genitalium).